A 577-amino-acid polypeptide reads, in one-letter code: Nuclear receptor subfamily 4 group A member 1 (577 aa).

A DNA-binding region (nuclear receptor) is located at residues Glu243 to Thr318. NR C4-type zinc fingers lie at residues Cys246 to Cys266 and Cys282 to Met311. Positions Ala247–Lys333 are required for binding NBRE-containing DNA. The NR LBD domain occupies Ser339–Thr574. The may bind lipopolysaccharide stretch occupies residues Pro500–Asn523. Residues Pro563 to Thr574 form an AF-2 region.

This sequence belongs to the nuclear hormone receptor family. NR4 subfamily. Zn(2+) is required as a cofactor.

It localises to the nucleus. The protein localises to the cytoplasm. Its subcellular location is the cytosol. Its function is as follows. Orphan nuclear receptor. Binds the NGFI-B response element (NBRE) 5'-AAAAGGTCA-3'. Functionally, in the cytosol, may detect bacterial lipopolysaccharide (LPS) and NBRE-containing mitochondrial DNA released during pyroptosis, and play a role in non-canonical inflammasome activation. In Xenopus laevis (African clawed frog), this protein is Nuclear receptor subfamily 4 group A member 1 (nr4a1).